The chain runs to 181 residues: Interleukin-10 (181 aa).

A signal peptide spans 1 to 19 (MHGSALLCCCLVLLAGVGA). 2 cysteine pairs are disulfide-bonded: Cys31/Cys129 and Cys81/Cys135. Residue Asn137 is glycosylated (N-linked (GlcNAc...) asparagine).

This sequence belongs to the IL-10 family. Homodimer. Interacts with IL10RA and IL10RB.

The protein resides in the secreted. In terms of biological role, major immune regulatory cytokine that acts on many cells of the immune system where it has profound anti-inflammatory functions, limiting excessive tissue disruption caused by inflammation. Mechanistically, IL10 binds to its heterotetrameric receptor comprising IL10RA and IL10RB leading to JAK1 and STAT2-mediated phosphorylation of STAT3. In turn, STAT3 translocates to the nucleus where it drives expression of anti-inflammatory mediators. Targets antigen-presenting cells (APCs) such as macrophages and monocytes and inhibits their release of pro-inflammatory cytokines including granulocyte-macrophage colony-stimulating factor /GM-CSF, granulocyte colony-stimulating factor/G-CSF, IL-1 alpha, IL-1 beta, IL-6, IL-8 and TNF-alpha. Also interferes with antigen presentation by reducing the expression of MHC-class II and co-stimulatory molecules, thereby inhibiting their ability to induce T cell activation. In addition, controls the inflammatory response of macrophages by reprogramming essential metabolic pathways including mTOR signaling. This chain is Interleukin-10 (IL10), found in Canis lupus familiaris (Dog).